Here is a 389-residue protein sequence, read N- to C-terminus: MEAAGAPCAPPPPAGSQTGAPPANLSSAPHNCSAEGYIYQDSVALPWKVLLVILLALITLATTLSNAFVIATVYRTRKLHTPANYLIASLAVTDLLVSILVMPISTMYTVTGRWTLGQVVCDLWLSSDITCCTASILHLCVIALDRYWAITDAVEYSAKRTPKRAAVMIALVWVFSISISLPPFFWRQAKAEEEVSDCVVNTDHILYTVYSTVGAFYFPTLLLIALYGRIYVEARSRILKQTPNRTGKRLTRAQLITDSPGSTSSVTSVNSRAPDVPSESGSPVYVNQVKVRVSDALLEKKKLMAARERKATKTLGIILGAFIVCWLPFFIISLVMPICKDACWFHLAIFDFFTWLGYLNSLINPIIYTMSNEDFKQAFHKLIRFKCAG.

A disordered region spans residues 1–27; that stretch reads MEAAGAPCAPPPPAGSQTGAPPANLSS. Topologically, residues 1–45 are extracellular; the sequence is MEAAGAPCAPPPPAGSQTGAPPANLSSAPHNCSAEGYIYQDSVAL. The span at 16–27 shows a compositional bias: polar residues; the sequence is SQTGAPPANLSS. 2 N-linked (GlcNAc...) asparagine glycosylation sites follow: Asn-24 and Asn-31. A helical transmembrane segment spans residues 46–71; the sequence is PWKVLLVILLALITLATTLSNAFVIA. Topologically, residues 72–85 are cytoplasmic; that stretch reads TVYRTRKLHTPANY. Residues 86–110 form a helical membrane-spanning segment; it reads LIASLAVTDLLVSILVMPISTMYTV. The Extracellular segment spans residues 111-118; sequence TGRWTLGQ. Residues 119 to 144 form a helical membrane-spanning segment; that stretch reads VVCDLWLSSDITCCTASILHLCVIAL. The cysteines at positions 121 and 198 are disulfide-linked. Residues Asp-128 and Thr-133 each coordinate ergotamine. The DRY motif; important for ligand-induced conformation changes and signaling signature appears at 145–147; it reads DRY. At 145–164 the chain is on the cytoplasmic side; it reads DRYWAITDAVEYSAKRTPKR. Residues 165–183 form a helical membrane-spanning segment; sequence AAVMIALVWVFSISISLPP. Over 184-204 the chain is Extracellular; the sequence is FFWRQAKAEEEVSDCVVNTDH. Residue Val-200 coordinates ergotamine. Residues 205-228 form a helical membrane-spanning segment; sequence ILYTVYSTVGAFYFPTLLLIALYG. Residues 229–314 lie on the Cytoplasmic side of the membrane; sequence RIYVEARSRI…AARERKATKT (86 aa). Positions 258 to 271 are enriched in polar residues; the sequence is DSPGSTSSVTSVNS. Residues 258–281 are disordered; sequence DSPGSTSSVTSVNSRAPDVPSESG. Residues 315-336 form a helical membrane-spanning segment; it reads LGIILGAFIVCWLPFFIISLVM. Residues 337 to 346 are Extracellular-facing; the sequence is PICKDACWFH. The helical transmembrane segment at 347 to 369 threads the bilayer; the sequence is LAIFDFFTWLGYLNSLINPIIYT. An NPxxY motif; important for ligand-induced conformation changes and signaling motif is present at residues 364–368; the sequence is NPIIY. Over 370–389 the chain is Cytoplasmic; that stretch reads MSNEDFKQAFHKLIRFKCAG. A lipid anchor (S-palmitoyl cysteine) is attached at Cys-387.

The protein belongs to the G-protein coupled receptor 1 family. Homodimer. Heterodimer with HTR1D. Phosphorylated. Desensitization of the receptor may be mediated by its phosphorylation. In terms of processing, palmitoylated.

It is found in the cell membrane. Its function is as follows. G-protein coupled receptor for 5-hydroxytryptamine (serotonin). Also functions as a receptor for ergot alkaloid derivatives, various anxiolytic and antidepressant drugs and other psychoactive substances, such as lysergic acid diethylamide (LSD). Ligand binding causes a conformation change that triggers signaling via guanine nucleotide-binding proteins (G proteins) and modulates the activity of downstream effectors, such as adenylate cyclase. HTR1B is coupled to G(i)/G(o) G alpha proteins and mediates inhibitory neurotransmission by inhibiting adenylate cyclase activity. Arrestin family members inhibit signaling via G proteins and mediate activation of alternative signaling pathways. Regulates the release of 5-hydroxytryptamine, dopamine and acetylcholine in the brain, and thereby affects neural activity, nociceptive processing, pain perception, mood and behavior. Besides, plays a role in vasoconstriction of cerebral arteries. The protein is 5-hydroxytryptamine receptor 1B (HTR1B) of Canis lupus familiaris (Dog).